Consider the following 434-residue polypeptide: Solute carrier RCH1 (434 aa).

Residues 1–15 (MKTQYSLIRKIWAHS) lie on the Cytoplasmic side of the membrane. A helical membrane pass occupies residues 16–36 (VTEFLKSQWFFICLAILIVIA). At 37–50 (RFAPNFARDGGLIK) the chain is on the extracellular side. Residues 51–71 (GQYSIGYGCVAWIFLQSGLGM) form a helical membrane-spanning segment. Residues 72–87 (KSRSLMANMLNWRAHA) are Cytoplasmic-facing. A helical membrane pass occupies residues 88-108 (TILVLSFLITSSIVYGFCCAV). The Extracellular segment spans residues 109–118 (KAANDPKIDD). Residues 119–139 (WVLIGLILTATCPTTVASNVI) traverse the membrane as a helical segment. The Cytoplasmic segment spans residues 140–149 (MTTNAGGNSL). A helical membrane pass occupies residues 150–170 (LCVCEVFIGNLLGAFITPALV). Residues 171–199 (QMFTNRAPFAYGNPATGNGIGALYGRVMK) lie on the Extracellular side of the membrane. A helical transmembrane segment spans residues 200–220 (QVGLSVFVPLFVGQVIQNCFP). Over 221-234 (KGTAYYLGFLKKYH) the chain is Cytoplasmic. A helical transmembrane segment spans residues 235-255 (IKIGSYMLLLIMFSSFSTAFY). The Extracellular segment spans residues 256-264 (QDAFTSVSH). Residues 265-285 (VCIIFLCFFNLGIYIFFTGLS) form a helical membrane-spanning segment. Residues 286–327 (YLCARPWFILKLFPHEPIEGKSTRLYRYSYNIFRPFYYSKED) are Cytoplasmic-facing. The helical transmembrane segment at 328–348 (AICIMFCGPAKTAALGVSLIT) threads the bilayer. The Extracellular portion of the chain corresponds to 349–362 (SQYGDKKEHLGKLL). A helical membrane pass occupies residues 363–383 (VPLVLYQVEQVMTANFFVSLF). At 384–434 (KRWIQKDAQADGSESSCANENEEVDLEKIISIGTGENQSVLSNNVPYTQPR) the chain is on the cytoplasmic side. A Phosphoserine modification is found at Ser425.

The protein belongs to the bile acid:sodium symporter (BASS) (TC 2.A.28) family.

It localises to the cell membrane. The protein resides in the bud neck. Functionally, solute carrier protein that negatively regulates the cytosolic calcium homeostasis in response to high levels of extracellular calcium. The protein is Solute carrier RCH1 of Saccharomyces cerevisiae (strain ATCC 204508 / S288c) (Baker's yeast).